Reading from the N-terminus, the 306-residue chain is Acetyl-coenzyme A carboxylase carboxyl transferase subunit beta (306 aa).

In terms of domain architecture, CoA carboxyltransferase N-terminal spans 27 to 296 (LWHKCPSCEA…PKFVAAPIEP (270 aa)). Residues C31, C34, C50, and C53 each contribute to the Zn(2+) site. The C4-type zinc-finger motif lies at 31-53 (CPSCEAVLYRPELEKTLDVCPKC).

Belongs to the AccD/PCCB family. In terms of assembly, acetyl-CoA carboxylase is a heterohexamer composed of biotin carboxyl carrier protein (AccB), biotin carboxylase (AccC) and two subunits each of ACCase subunit alpha (AccA) and ACCase subunit beta (AccD). Requires Zn(2+) as cofactor.

The protein localises to the cytoplasm. The enzyme catalyses N(6)-carboxybiotinyl-L-lysyl-[protein] + acetyl-CoA = N(6)-biotinyl-L-lysyl-[protein] + malonyl-CoA. It participates in lipid metabolism; malonyl-CoA biosynthesis; malonyl-CoA from acetyl-CoA: step 1/1. Component of the acetyl coenzyme A carboxylase (ACC) complex. Biotin carboxylase (BC) catalyzes the carboxylation of biotin on its carrier protein (BCCP) and then the CO(2) group is transferred by the transcarboxylase to acetyl-CoA to form malonyl-CoA. This chain is Acetyl-coenzyme A carboxylase carboxyl transferase subunit beta, found in Pseudomonas fluorescens (strain Pf0-1).